The following is a 117-amino-acid chain: Cell division protein FtsB (117 aa).

The Cytoplasmic segment spans residues 1 to 6 (MRDWRW). Residues 7–24 (MLLVLALLLGWLQYRFWF) form a helical membrane-spanning segment. The Periplasmic portion of the chain corresponds to 25-117 (GPGNSGEVMM…QVGDHPADVP (93 aa)). Residues 29–69 (SGEVMMLEAQVANQERDNEGLQQRNDALAAEVKDLKEGQSA) are a coiled coil.

It belongs to the FtsB family. Part of a complex composed of FtsB, FtsL and FtsQ.

It localises to the cell inner membrane. In terms of biological role, essential cell division protein. May link together the upstream cell division proteins, which are predominantly cytoplasmic, with the downstream cell division proteins, which are predominantly periplasmic. The polypeptide is Cell division protein FtsB (Stenotrophomonas maltophilia (strain K279a)).